The primary structure comprises 141 residues: Hemoglobin subunit alpha-A/Q/R/T (141 aa).

In terms of domain architecture, Globin spans 1–141 (VLSPADKTNV…VSTVLTSKYR (141 aa)). At S3 the chain carries Phosphoserine. K7 bears the N6-succinyllysine mark. Residue T8 is modified to Phosphothreonine. K11 is subject to N6-succinyllysine. K16 carries the post-translational modification N6-acetyllysine; alternate. N6-succinyllysine; alternate is present on K16. Y24 is modified (phosphotyrosine). Phosphoserine is present on S35. An N6-succinyllysine modification is found at K40. A Phosphoserine modification is found at S49. An O2-binding site is contributed by H58. H87 contacts heme b. S102 is modified (phosphoserine). Phosphothreonine is present on T108. Phosphoserine is present on residues S124 and S131. T134 and T137 each carry phosphothreonine. Residue S138 is modified to Phosphoserine.

Belongs to the globin family. As to quaternary structure, heterotetramer of two alpha chains and two beta chains. Red blood cells.

In terms of biological role, involved in oxygen transport from the lung to the various peripheral tissues. The polypeptide is Hemoglobin subunit alpha-A/Q/R/T (Macaca fascicularis (Crab-eating macaque)).